A 213-amino-acid chain; its full sequence is Ribonuclease T (213 aa).

One can recognise an Exonuclease domain in the interval 28-202 (VVVDVETGGF…YDTEQTARLF (175 aa)). Mg(2+)-binding residues include Asp-31, Glu-33, His-189, and Asp-194. Residue His-189 is the Proton donor/acceptor of the active site.

It belongs to the RNase T family. As to quaternary structure, homodimer. Requires Mg(2+) as cofactor.

In terms of biological role, trims short 3' overhangs of a variety of RNA species, leaving a one or two nucleotide 3' overhang. Responsible for the end-turnover of tRNA: specifically removes the terminal AMP residue from uncharged tRNA (tRNA-C-C-A). Also appears to be involved in tRNA biosynthesis. The chain is Ribonuclease T from Xanthomonas axonopodis pv. citri (strain 306).